Reading from the N-terminus, the 29-residue chain is Dander allergen Equ c 2.0101 (29 aa).

This sequence belongs to the calycin superfamily. Lipocalin family.

It localises to the secreted. The protein is Dander allergen Equ c 2.0101 of Equus caballus (Horse).